The sequence spans 333 residues: DNA repair and recombination protein RadA (333 aa).

An ATP-binding site is contributed by 127–134 (GEFGSGKT).

Belongs to the eukaryotic RecA-like protein family.

Functionally, involved in DNA repair and in homologous recombination. Binds and assemble on single-stranded DNA to form a nucleoprotein filament. Hydrolyzes ATP in a ssDNA-dependent manner and promotes DNA strand exchange between homologous DNA molecules. This is DNA repair and recombination protein RadA from Pyrobaculum aerophilum (strain ATCC 51768 / DSM 7523 / JCM 9630 / CIP 104966 / NBRC 100827 / IM2).